We begin with the raw amino-acid sequence, 478 residues long: Protein ZINC INDUCED FACILITATOR-LIKE 1 (478 aa).

A run of 12 helical transmembrane segments spans residues 43–63, 81–101, 108–128, 130–150, 169–189, 208–228, 280–300, 317–337, 346–367, 378–398, 415–435, and 453–473; these read IIVLCTALPISSLFPFLYFMI, FVGCSFMLGRAFTSVAWGLVA, PVILIGTASVVVFNTLFGLSL, FWMAIITRFCLGSFNGLLGPI, AVSTAWGIGLIIGPAIGGFLA, FPFFLPCLAISVFAFLVTIVS, IIVYCVFSLHDMAYTEIFSLW, VGSVLAFSGFGLLIFQLSLYS, IIVTRISGSLAMVVLSCYPLIA, VTSASVAKSVLGTSAITGLFI, IAMTAMSLFKAIGPAAAGIIF, and VFFILNVVLALGVVLTFKPFL.

It belongs to the major facilitator superfamily. In terms of tissue distribution, predominantly expressed in roots and stomatal guard cells. Detected in anther stamen filaments and shoot apical meristem. In the mature portion of roots, restricted to the cortex. At the root tip, highly expressed in both the cortical and epidermal cell layers of the apical meristem and the transition zone, while absent from the quiescent center or the columella cells. Not detected in lateral root primordia.

It is found in the cell membrane. The protein localises to the vacuole membrane. Its function is as follows. Major facilitator superfamily (MFS) transporter probably involved in 2,4-dichlorophenoxyacetic acid (2,4-D) export. K(+) may be the physiological substrate of the transporter. Modulates root auxin-related processes. Involved in auxin efflux and acts as a positive regulator of shootward transport at the root apex. May mediate proton efflux from the vacuolar compartment. In terms of biological role, mediates drought stress tolerance by regulating stomatal closure. The chain is Protein ZINC INDUCED FACILITATOR-LIKE 1 (ZIFL1) from Arabidopsis thaliana (Mouse-ear cress).